A 167-amino-acid polypeptide reads, in one-letter code: Zymogen granule membrane protein 16 (167 aa).

The first 16 residues, 1–16, serve as a signal peptide directing secretion; the sequence is MLAVALLVLLCASASA. Residues 24 to 159 enclose the Jacalin-type lectin domain; that stretch reads SSYSGEYGGK…IDSISLHWDT (136 aa).

It belongs to the jacalin lectin family.

The protein localises to the secreted. Its subcellular location is the extracellular space. It localises to the extracellular matrix. The protein resides in the zymogen granule lumen. It is found in the golgi apparatus lumen. Its function is as follows. May play a role in protein trafficking. May act as a linker molecule between the submembranous matrix on the luminal side of zymogen granule membrane (ZGM) and aggregated secretory proteins during granule formation in the TGN. The chain is Zymogen granule membrane protein 16 (Zg16) from Mus musculus (Mouse).